A 375-amino-acid chain; its full sequence is Ubl carboxyl-terminal hydrolase 18 (375 aa).

The tract at residues 18–45 (ESPQSPADLEEKKEEDSNMKREQPRERP) is disordered. Basic and acidic residues predominate over residues 26 to 45 (LEEKKEEDSNMKREQPRERP). Positions 55–373 (VGLHNIGQTC…TAYLLVYMKM (319 aa)) constitute a USP domain. The Nucleophile role is filled by cysteine 64. The Proton acceptor role is filled by histidine 321.

Belongs to the peptidase C19 family. In terms of assembly, interacts with STAT2; the interaction is direct. Interacts with IFNAR2; indirectly via STAT2, it negatively regulates the assembly of the ternary interferon-IFNAR1-IFNAR2 complex and inhibits type I interferon signaling. Interacts with STING1. Interacts with USP20.

The catalysed reaction is Thiol-dependent hydrolysis of ester, thioester, amide, peptide and isopeptide bonds formed by the C-terminal Gly of ubiquitin (a 76-residue protein attached to proteins as an intracellular targeting signal).. Functionally, interferon-induced ISG15-specific protease that plays a crucial role for maintaining a proper balance of ISG15-conjugated proteins in cells. Regulates protein ISGylation by efficiently cleaving ISG15 conjugates linked via isopeptide bonds. Regulates T-cell activation and T-helper 17 (Th17) cell differentiation by deubiquitinating TAK1, likely to keep TAK1-TAB complexes in steady conditions. In turn, restricts activation of NF-kappa-B, NFAT, and JNK as well as expression of IL2 in T-cells after TCR activation. Acts as a molecular adapter with USP20 to promote innate antiviral response through deubiquitinating STING1. Involved also in the negative regulation of the inflammatory response triggered by type I interferon. Upon recruitment by STAT2 to the type I interferon receptor subunit IFNAR2 interferes with the assembly of the ternary interferon-IFNAR1-IFNAR2 complex and acts as a negative regulator of the type I interferon signaling pathway. The polypeptide is Ubl carboxyl-terminal hydrolase 18 (USP18) (Pongo abelii (Sumatran orangutan)).